We begin with the raw amino-acid sequence, 438 residues long: 3-phosphoshikimate 1-carboxyvinyltransferase (438 aa).

3 residues coordinate 3-phosphoshikimate: lysine 23, serine 24, and arginine 28. Lysine 23 provides a ligand contact to phosphoenolpyruvate. Phosphoenolpyruvate-binding residues include glycine 94 and arginine 122. Serine 167, glutamine 169, aspartate 321, and lysine 348 together coordinate 3-phosphoshikimate. Position 169 (glutamine 169) interacts with phosphoenolpyruvate. Aspartate 321 acts as the Proton acceptor in catalysis. 2 residues coordinate phosphoenolpyruvate: arginine 352 and arginine 393.

The protein belongs to the EPSP synthase family. In terms of assembly, monomer.

The protein resides in the cytoplasm. It catalyses the reaction 3-phosphoshikimate + phosphoenolpyruvate = 5-O-(1-carboxyvinyl)-3-phosphoshikimate + phosphate. It participates in metabolic intermediate biosynthesis; chorismate biosynthesis; chorismate from D-erythrose 4-phosphate and phosphoenolpyruvate: step 6/7. Functionally, catalyzes the transfer of the enolpyruvyl moiety of phosphoenolpyruvate (PEP) to the 5-hydroxyl of shikimate-3-phosphate (S3P) to produce enolpyruvyl shikimate-3-phosphate and inorganic phosphate. The polypeptide is 3-phosphoshikimate 1-carboxyvinyltransferase (Helicobacter hepaticus (strain ATCC 51449 / 3B1)).